The chain runs to 493 residues: Probable cytosol aminopeptidase (493 aa).

Residues Lys-257 and Asp-262 each coordinate Mn(2+). Lys-269 is an active-site residue. 3 residues coordinate Mn(2+): Asp-281, Asp-341, and Glu-343. Arg-345 is an active-site residue.

It belongs to the peptidase M17 family. Requires Mn(2+) as cofactor.

Its subcellular location is the cytoplasm. It catalyses the reaction Release of an N-terminal amino acid, Xaa-|-Yaa-, in which Xaa is preferably Leu, but may be other amino acids including Pro although not Arg or Lys, and Yaa may be Pro. Amino acid amides and methyl esters are also readily hydrolyzed, but rates on arylamides are exceedingly low.. The catalysed reaction is Release of an N-terminal amino acid, preferentially leucine, but not glutamic or aspartic acids.. In terms of biological role, presumably involved in the processing and regular turnover of intracellular proteins. Catalyzes the removal of unsubstituted N-terminal amino acids from various peptides. This is Probable cytosol aminopeptidase from Prochlorococcus marinus (strain MIT 9211).